Here is an 868-residue protein sequence, read N- to C-terminus: Phospholipase D delta (868 aa).

The C2 domain occupies 1 to 154; it reads MAEKVSEDVM…ASGERISGWF (154 aa). Ca(2+) is bound at residue Asp216. A PLD phosphodiesterase 1 domain is found at 368 to 403; the sequence is TLFTHHQKCVLVDTQAVGNNRKVTAFIGGLDLCDGR. Residues His373, Lys375, and Asp380 contribute to the active site. A 1,2-diacyl-sn-glycero-3-phosphate is bound at residue His373. His409 and His440 together coordinate Ca(2+). A 1,2-diacyl-sn-glycero-3-phosphate-binding residues include Gln588 and His718. Residues 713–740 enclose the PLD phosphodiesterase 2 domain; the sequence is FMIYVHAKGMIVDDEYVLMGSANINQRS. Active-site residues include His718, Lys720, and Asp725. Position 781 (Glu781) interacts with Ca(2+).

This sequence belongs to the phospholipase D family. C2-PLD subfamily. Interacts with GAPC1 and GAPC2. Increased interaction in the presence of H(2)O(2). Ca(2+) is required as a cofactor. As to expression, expressed in roots, leaves, stems, siliques and flowers. Strongly expressed in the vascular tissues of cotyledons and leaves under dehydration stress conditions. Expression is higher in old leaves than in young leaves. Expressed in leaves and guard cells. The isoform 2 may not be present in siliques.

The protein resides in the cell membrane. The catalysed reaction is a 1,2-diacyl-sn-glycero-3-phosphocholine + H2O = a 1,2-diacyl-sn-glycero-3-phosphate + choline + H(+). Activated by free oleic acid in a dose-dependent manner and less effectively by other unsaturated fatty acids such as linoleic and linolenic acids. Not activated by the saturated fatty acids stearic and palmitic acids. PIP2 and Ca(2+) stimulate activity by promoting lipid substrate binding to the active site. Activated by H(2)O(2) and by binding to GAPC. Hydrolyzes glycerol-phospholipids at the terminal phosphodiesteric bond to generate phosphatidic acids (PA). May be involved in PA accumulation in the dehydration stress response and in the transduction of hormonal and environmental signals to the microtubules cytoskeleton. Prefers phosphatidylethanolamine to phosphatidylcholine as substrate. Involved in H(2)O(2) and abscisic acid (ABA)-induced stomatal closure. Involved in nitric oxide (NO) signaling during stomatal closure. Plays a positive role in ABA-promoted senescence. Involved in basal defense and nonhost resistance. This chain is Phospholipase D delta, found in Arabidopsis thaliana (Mouse-ear cress).